A 631-amino-acid chain; its full sequence is MAGKFRCILLLIAGLFVSSLSYAENTEIPSYEEGISLFDVEATLQPDGVLDIKENIHFQARNQQIKHGFYRDLPRLWMQPDGDAALLNYHIVGVTRDGIPEPWHLDWHIGLMSIVVGDKQRFLPQGDYHYQIHYQVKNAFLREGDSDLLIWNVTGNHWPFEIYKTRFSLQFSNIAGNPFSEIDLFTGEEGDTYRNGRILEDGRIESRDPFYREDFTVLYRWPHALLSNASAPQTTNIFSHLLLPSTSSLLIWFPCLFLVCGWLYLWKRRPQFTPVDVIETDVIPPDYTPGMLRLDAKLVYDDKGFCADIVNLIVKGKIHLEDQSDKNQQILIRVNEGATRNNAVLLPAEQLLLEALFRKGDKVVLTGRRNRVLRRAFLRMQKFYLPRKKSSFYRSDTFLQWGGLAILAVILYGNLSPVGWAGMSLVGDMFIMICWIIPFLFCSLELLFARDDDKPCVNRVIITLFLPLICSGVAFYSLYINVGDVFFYWYMPAGYFTAVCLTGYLTGMGYIFLPKFTQTGQQRYAHGEAIVNYLARKEAATHSGRRRKGETRKLDYALLGWAISANLGREWALRIAPSLSSAIRAPEIARNGVLFSLQTHLSCGANTSLLGRSYSGGGAGGGAGGGGGGGW.

This is an uncharacterized protein from Escherichia coli (strain K12).